The following is a 158-amino-acid chain: Protein Smg homolog (158 aa).

It belongs to the Smg family.

The sequence is that of Protein Smg homolog from Shewanella sp. (strain MR-4).